We begin with the raw amino-acid sequence, 160 residues long: Phosphopantetheine adenylyltransferase (160 aa).

Thr-9 serves as a coordination point for substrate. ATP is bound by residues 9–10 (TF) and His-17. Substrate is bound by residues Lys-41, Leu-73, and Arg-87. Residues 88 to 90 (GLR), Glu-98, and 123 to 129 (FSYTSSS) contribute to the ATP site.

It belongs to the bacterial CoaD family. Homohexamer. The cofactor is Mg(2+).

Its subcellular location is the cytoplasm. It carries out the reaction (R)-4'-phosphopantetheine + ATP + H(+) = 3'-dephospho-CoA + diphosphate. It participates in cofactor biosynthesis; coenzyme A biosynthesis; CoA from (R)-pantothenate: step 4/5. Reversibly transfers an adenylyl group from ATP to 4'-phosphopantetheine, yielding dephospho-CoA (dPCoA) and pyrophosphate. This chain is Phosphopantetheine adenylyltransferase, found in Opitutus terrae (strain DSM 11246 / JCM 15787 / PB90-1).